The chain runs to 321 residues: Cytochrome c biogenesis protein CcsA (321 aa).

The next 7 helical transmembrane spans lie at Ile9–Leu29, Gly44–Gly64, Leu68–Ile88, Met143–Ile163, Val226–Asn246, Thr260–His274, and Val289–Ile309.

Belongs to the CcmF/CycK/Ccl1/NrfE/CcsA family. May interact with Ccs1.

Its subcellular location is the plastid. It localises to the chloroplast thylakoid membrane. Functionally, required during biogenesis of c-type cytochromes (cytochrome c6 and cytochrome f) at the step of heme attachment. This is Cytochrome c biogenesis protein CcsA from Oryza sativa (Rice).